Consider the following 382-residue polypeptide: Alkanesulfonate monooxygenase (382 aa).

The protein belongs to the SsuD family.

The enzyme catalyses an alkanesulfonate + FMNH2 + O2 = an aldehyde + FMN + sulfite + H2O + 2 H(+). In terms of biological role, catalyzes the desulfonation of aliphatic sulfonates. This is Alkanesulfonate monooxygenase from Pseudomonas putida (strain W619).